The chain runs to 421 residues: Putative bifunctional polynucleotide phosphatase/kinase (421 aa).

The phosphatase stretch occupies residues 25–231; it reads DSYLKGIINN…SENLKTNYKL (207 aa). A kinase region spans residues 235 to 415; that stretch reads NPTEIIDEIE…DDPKWKRSFM (181 aa). 265 to 272 serves as a coordination point for ATP; that stretch reads GQPGSGKS.

In the N-terminal section; belongs to the DNA 3' phosphatase family.

The enzyme catalyses a 3'end (2'-deoxyribonucleotide 3'-phosphate)-DNA + H2O = a 3'-end 2'-deoxyribonucleotide-DNA + phosphate. The catalysed reaction is a 5'-end dephospho-2'-deoxyribonucleoside-DNA + ATP = a 5'-end 5'-phospho-2'-deoxyribonucleoside-DNA + ADP + H(+). This chain is Putative bifunctional polynucleotide phosphatase/kinase, found in Acanthamoeba polyphaga mimivirus (APMV).